We begin with the raw amino-acid sequence, 77 residues long: TIDXPEDFKHYEVQLPDVKIHYVREGAGPTLLLVEKPEIAIDRIKTAFRKPDNIHGGFNYYRANIRPDAALWTDLDH.

As to quaternary structure, monomer.

The enzyme catalyses an epoxide + H2O = an ethanediol. Functionally, this enzyme acts on aliphatic epoxides. Its substrates include epichlorohydrin, epibromohydrin, epoxyoctane and styrene epoxide. The chain is Epoxide hydrolase from Pseudomonas sp. (strain AD1).